The chain runs to 134 residues: Large ribosomal subunit protein uL16c (134 aa).

Residues 1–17 (MLSPKRTRFRKQHRGRM) are compositionally biased toward basic residues. Residues 1–22 (MLSPKRTRFRKQHRGRMKGISS) form a disordered region.

It belongs to the universal ribosomal protein uL16 family. Part of the 50S ribosomal subunit.

The protein resides in the plastid. The protein localises to the chloroplast. The protein is Large ribosomal subunit protein uL16c of Solanum tuberosum (Potato).